The following is a 105-amino-acid chain: Met repressor (105 aa).

The protein belongs to the MetJ family. In terms of assembly, homodimer.

The protein resides in the cytoplasm. Functionally, this regulatory protein, when combined with SAM (S-adenosylmethionine) represses the expression of the methionine regulon and of enzymes involved in SAM synthesis. This Vibrio vulnificus (strain CMCP6) protein is Met repressor.